The primary structure comprises 558 residues: Phosphatidylserine lipase ABHD16A (558 aa).

A run of 2 helical transmembrane segments spans residues 60–80 (ILAL…FAFF) and 93–113 (VVPF…VACL). Residues 114–558 (RGIGRWTNPQ…AQNFQMPWHL (445 aa)) lie on the Cytoplasmic side of the membrane. Residues 281–407 (LVICCEGNAG…LVTRTVRQHL (127 aa)) enclose the AB hydrolase-1 domain. Residues serine 355, aspartate 430, and histidine 507 each act as charge relay system in the active site.

The protein belongs to the AB hydrolase superfamily. ABHD16 family.

The protein localises to the membrane. The catalysed reaction is 1-heptadecanoyl-2-(5Z,8Z,11Z,14Z-eicosatetraenoyl)-sn-glycero-3-phosphoserine + H2O = 1-heptadecanoyl-sn-glycero-3-phosphoserine + (5Z,8Z,11Z,14Z)-eicosatetraenoate + H(+). The enzyme catalyses 1-hexadecanoyl-2-(9Z-octadecenoyl)-sn-glycero-3-phospho-L-serine + H2O = 1-hexadecanoyl-sn-glycero-3-phospho-L-serine + (9Z)-octadecenoate + H(+). It carries out the reaction 1-octadecanoyl-2-(9Z,12Z-octadecadienoyl)-sn-glycero-3-phosphoserine + H2O = 1-octadecanoyl-sn-glycero-3-phosphoserine + (9Z,12Z)-octadecadienoate + H(+). It catalyses the reaction 1-heptadecanoyl-2-(5Z,8Z,11Z,14Z-eicosatetraenoyl)-sn-glycero-3-phosphocholine + H2O = 1-heptadecanoyl-sn-glycero-3-phosphocholine + (5Z,8Z,11Z,14Z)-eicosatetraenoate + H(+). The catalysed reaction is 1-hexadecanoyl-2-(9Z-octadecenoyl)-sn-glycero-3-phosphoglycerol + H2O = 1-hexadecanoyl-sn-glycero-3-phosphoglycerol + (9Z)-octadecenoate + H(+). The enzyme catalyses 1-hexadecanoyl-2-(9Z-octadecenoyl)-sn-glycero-3-phospho-(1D-myo-inositol) + H2O = 1-hexadecanoyl-sn-glycero-3-phospho-(1D-myo-inositol) + (9Z)-octadecenoate + H(+). It carries out the reaction 1-heptadecanoyl-2-(5Z,8Z,11Z,14Z-eicosatetraenoyl)-sn-glycero-3-phosphoethanolamine + H2O = 1-heptadecanoyl-sn-glycero-3-phosphoethanolamine + (5Z,8Z,11Z,14Z)-eicosatetraenoate + H(+). It catalyses the reaction 1-hexadecanoyl-2-(9Z-octadecenoyl)-sn-glycero-3-phospho-(1'-sn-glycerol) + H2O = 1-hexadecanoyl-sn-glycero-3-phospho-(1'-sn-glycerol) + (9Z)-octadecenoate + H(+). The catalysed reaction is Hydrolyzes glycerol monoesters of long-chain fatty acids.. The enzyme catalyses 1-tetradecanoylglycerol + H2O = tetradecanoate + glycerol + H(+). It carries out the reaction 2-hexadecanoylglycerol + H2O = glycerol + hexadecanoate + H(+). It catalyses the reaction 1-(9Z-octadecenoyl)-glycerol + H2O = glycerol + (9Z)-octadecenoate + H(+). The catalysed reaction is 2-(9Z-octadecenoyl)-glycerol + H2O = glycerol + (9Z)-octadecenoate + H(+). The enzyme catalyses 2-(9Z,12Z-octadecadienoyl)-glycerol + H2O = (9Z,12Z)-octadecadienoate + glycerol + H(+). It carries out the reaction 1-(5Z,8Z,11Z,14Z-eicosatetraenoyl)-glycerol + H2O = glycerol + (5Z,8Z,11Z,14Z)-eicosatetraenoate + H(+). It catalyses the reaction 2-(5Z,8Z,11Z,14Z-eicosatetraenoyl)-glycerol + H2O = glycerol + (5Z,8Z,11Z,14Z)-eicosatetraenoate + H(+). The catalysed reaction is prostaglandin D2-1-glycerol ester + H2O = prostaglandin D2 + glycerol + H(+). The enzyme catalyses 2-glyceryl-15-deoxy-Delta(12,14)-prostaglandin J2 + H2O = 15-deoxy-Delta(12,14)-prostaglandin J2 + glycerol + H(+). It carries out the reaction 1-(9Z,12Z-octadecadienoyl)-glycerol + H2O = (9Z,12Z)-octadecadienoate + glycerol + H(+). Phosphatidylserine (PS) lipase that mediates the hydrolysis of phosphatidylserine to generate lysophosphatidylserine (LPS). LPS constitutes a class of signaling lipids that regulates immunological and neurological processes. Has no activity towards diacylglycerol, triacylglycerol or lysophosphatidylserine lipase. Also has monoacylglycerol lipase activity, with preference for 1-(9Z,12Z-octadecadienoyl)-glycerol (1-LG) and 2-glyceryl-15-deoxy-Delta(12,14)-prostaglandin J2 (15d-PGJ(2)-G). In Pongo abelii (Sumatran orangutan), this protein is Phosphatidylserine lipase ABHD16A.